Consider the following 466-residue polypeptide: Soluble pyridine nucleotide transhydrogenase (466 aa).

36–45 serves as a coordination point for FAD; it reads ERYQNVGGGC.

This sequence belongs to the class-I pyridine nucleotide-disulfide oxidoreductase family. FAD serves as cofactor.

Its subcellular location is the cytoplasm. The enzyme catalyses NAD(+) + NADPH = NADH + NADP(+). Conversion of NADPH, generated by peripheral catabolic pathways, to NADH, which can enter the respiratory chain for energy generation. The sequence is that of Soluble pyridine nucleotide transhydrogenase from Shigella boydii serotype 18 (strain CDC 3083-94 / BS512).